We begin with the raw amino-acid sequence, 458 residues long: Estrogen-related receptor gamma (458 aa).

Residue Lys40 forms a Glycyl lysine isopeptide (Lys-Gly) (interchain with G-Cter in SUMO) linkage. The span at 42 to 52 shows a compositional bias: polar residues; the sequence is EPSSPASLTDS. The tract at residues 42–85 is disordered; the sequence is EPSSPASLTDSVNHHSPGGSSDASGSYSSTMNGHQNGLDSPPLY. Ser45 bears the Phosphoserine mark. Over residues 57–70 the composition is skewed to low complexity; sequence SPGGSSDASGSYSS. The nuclear receptor DNA-binding region spans 125–200; sequence KRLCLVCGDI…VGMLKEGVRL (76 aa). 2 consecutive NR C4-type zinc fingers follow at residues 128-148 and 164-188; these read CLVC…CEAC and CPAT…FMKC. The region spanning 233–457 is the NR LBD domain; it reads PYNKIVSHLL…KLFLEMLEAK (225 aa).

It belongs to the nuclear hormone receptor family. NR3 subfamily. In terms of assembly, homodimer. Binds TLE1, PNRC1 and PNRC2. Binds GRIP1. Interacts with NRIP1, NCOA1 and NCOR2. Post-translationally, acetylated by PCAF/KAT2 (in vitro). Sumoylation on Lys-40 is enhanced by phosphorylation at Ser-45 and represses transcriptional activity. In terms of processing, phosphorylation on Ser-45 enhances sumoylation on Lys-40 thus repressing transcriptional activity. In terms of tissue distribution, expressed in the heart, kidney, brain, lung, bone marrow, adrenal gland, trachea, spinal cord and thyroid gland.

Its subcellular location is the nucleus. In terms of biological role, orphan receptor that acts as a transcription activator in the absence of bound ligand. Binds specifically to an estrogen response element and activates reporter genes controlled by estrogen response elements. Induces the expression of PERM1 in the skeletal muscle. This is Estrogen-related receptor gamma (ESRRG) from Homo sapiens (Human).